Here is a 75-residue protein sequence, read N- to C-terminus: Tautomerase PptA (75 aa).

The Proton acceptor; via imino nitrogen role is filled by Pro2.

The protein belongs to the 4-oxalocrotonate tautomerase family. PptA subfamily. In terms of assembly, homodimer.

It is found in the cytoplasm. The sequence is that of Tautomerase PptA from Shigella sonnei (strain Ss046).